The chain runs to 317 residues: Tenomodulin (317 aa).

The Cytoplasmic segment spans residues 1–30 (MAKNPPENCEGCHILNAEALKSKKIRKSLK). Residues 31–50 (ICGLVFGILALTLIVLFWGS) form a helical; Signal-anchor for type II membrane protein membrane-spanning segment. Residues 51–317 (KHFWPEVSKK…WWVARMLGRV (267 aa)) lie on the Extracellular side of the membrane. One can recognise a BRICHOS domain in the interval 93–186 (GNGTDETLEV…ICDNVTMYWI (94 aa)). N-linked (GlcNAc...) asparagine glycosylation occurs at Asn94. The cysteines at positions 120 and 178 are disulfide-linked. An N-linked (GlcNAc...) asparagine glycan is attached at Asn180. Phosphoserine is present on Ser239.

It belongs to the chondromodulin-1 family. Highly expressed in tendons.

It is found in the membrane. The protein resides in the nucleus envelope. Functionally, may be an angiogenesis inhibitor. This chain is Tenomodulin (Tnmd), found in Rattus norvegicus (Rat).